The following is an 853-amino-acid chain: DNA mismatch repair protein MutS (853 aa).

614–621 (GPNMGGKS) serves as a coordination point for ATP.

Belongs to the DNA mismatch repair MutS family.

Its function is as follows. This protein is involved in the repair of mismatches in DNA. It is possible that it carries out the mismatch recognition step. This protein has a weak ATPase activity. The polypeptide is DNA mismatch repair protein MutS (Escherichia coli O81 (strain ED1a)).